We begin with the raw amino-acid sequence, 89 residues long: Sec translocon accessory complex subunit YrbF (89 aa).

The chain crosses the membrane as a helical span at residues 4 to 24 (GTLGTLVPIILMFAVLYFLLI).

The protein belongs to the YajC family. Part of the SecDF-YidC-YajC translocase complex. The SecDF-YidC-YajC translocase forms a supercomplex with SecYEG, called the holo-translocon (HTL).

The protein localises to the cell membrane. The SecYEG-SecDF-YajC-YidC holo-translocon (HTL) protein secretase/insertase is a supercomplex required for protein secretion, insertion of proteins into membranes, and assembly of membrane protein complexes. While the SecYEG complex is essential for assembly of a number of proteins and complexes, the SecDF-YajC-YidC subcomplex facilitates these functions. This is Sec translocon accessory complex subunit YrbF (yrbF) from Bacillus subtilis (strain 168).